The sequence spans 252 residues: Hydroxyacylglutathione hydrolase (252 aa).

Zn(2+) contacts are provided by His-54, His-56, Asp-58, His-59, His-111, Asp-130, and His-170.

It belongs to the metallo-beta-lactamase superfamily. Glyoxalase II family. As to quaternary structure, monomer. Zn(2+) serves as cofactor.

The catalysed reaction is an S-(2-hydroxyacyl)glutathione + H2O = a 2-hydroxy carboxylate + glutathione + H(+). It functions in the pathway secondary metabolite metabolism; methylglyoxal degradation; (R)-lactate from methylglyoxal: step 2/2. In terms of biological role, thiolesterase that catalyzes the hydrolysis of S-D-lactoyl-glutathione to form glutathione and D-lactic acid. This chain is Hydroxyacylglutathione hydrolase, found in Francisella tularensis subsp. tularensis (strain FSC 198).